Reading from the N-terminus, the 701-residue chain is Acetyl-coenzyme A synthetase, cytoplasmic (701 aa).

The segment covering 1 to 26 (MGLPEERRKSGSGSRAREETGAEGRV) has biased composition (basic and acidic residues). A disordered region spans residues 1-37 (MGLPEERRKSGSGSRAREETGAEGRVRGWSPPPEVRR). Residues 1–107 (MGLPEERRKS…GATTNICYNV (107 aa)) are interaction with TFEB. S30 carries the phosphoserine modification. 219 to 222 (RGEK) contributes to the CoA binding site. Phosphoserine is present on residues S263, S265, and S267. Residue T363 coordinates CoA. An N6-acetyllysine modification is found at K418. ATP is bound by residues 439–441 (GEP), 463–468 (DTFWQT), D552, and R567. S575 and R636 together coordinate CoA. Positions 656 to 668 (KTRSGKIMRRVLR) match the Nuclear localization signal motif. The residue at position 659 (S659) is a Phosphoserine; by AMPK. K661 bears the N6-acetyllysine mark.

Belongs to the ATP-dependent AMP-binding enzyme family. Monomer. Interacts with TFEB. AMPK-mediated phosphorylated form at Ser-659 interacts with KPNA1; this interaction results in nuclear translocation of ACSS2. Interacts with the 'Thr-172' phosphorylated form of PRKAA2. Interacts with CREBBP. Post-translationally, reversibly acetylated at Lys-661. The acetyl-CoA synthase activity is inhibited by acetylation and activated by deacetylation mediated by the deacetylases SIRT1 and SIRT3. As to expression, expressed in the hippocampus.

The protein resides in the cytoplasm. It is found in the cytosol. Its subcellular location is the nucleus. It carries out the reaction acetate + ATP + CoA = acetyl-CoA + AMP + diphosphate. The catalysed reaction is propanoate + ATP + CoA = propanoyl-CoA + AMP + diphosphate. With respect to regulation, inhibited by acetylation at Lys-661 and activated by deacetylation mediated by the deacetylases SIRT1 and SIRT3. In terms of biological role, catalyzes the synthesis of acetyl-CoA from short-chain fatty acids. Acetate is the preferred substrate but can also utilize propionate with a much lower affinity. Nuclear ACSS2 promotes glucose deprivation-induced lysosomal biogenesis and autophagy, tumor cell survival and brain tumorigenesis. Glucose deprivation results in AMPK-mediated phosphorylation of ACSS2 leading to its translocation to the nucleus where it binds to TFEB and locally produces acetyl-CoA for histone acetylation in the promoter regions of TFEB target genes thereby activating their transcription. The regulation of genes associated with autophagy and lysosomal activity through ACSS2 is important for brain tumorigenesis and tumor survival. Acts as a chromatin-bound transcriptional coactivator that up-regulates histone acetylation and expression of neuronal genes. Can be recruited to the loci of memory-related neuronal genes to maintain a local acetyl-CoA pool, providing the substrate for histone acetylation and promoting the expression of specific genes, which is essential for maintaining long-term spatial memory. The polypeptide is Acetyl-coenzyme A synthetase, cytoplasmic (Acss2) (Mus musculus (Mouse)).